Consider the following 436-residue polypeptide: Adenylosuccinate synthetase (436 aa).

GTP-binding positions include 12 to 18 (GDEGKGK) and 40 to 42 (GHT). Aspartate 13 serves as the catalytic Proton acceptor. Residues aspartate 13 and glycine 40 each coordinate Mg(2+). IMP is bound by residues 13 to 16 (DEGK), 38 to 41 (NAGH), threonine 128, arginine 142, glutamine 223, threonine 238, and arginine 302. The Proton donor role is filled by histidine 41. Substrate is bound at residue 298–304 (TTTGRRR). Residues arginine 304, 330–332 (KLD), and 412–414 (SLG) contribute to the GTP site.

This sequence belongs to the adenylosuccinate synthetase family. In terms of assembly, homodimer. The cofactor is Mg(2+).

The protein resides in the cytoplasm. It catalyses the reaction IMP + L-aspartate + GTP = N(6)-(1,2-dicarboxyethyl)-AMP + GDP + phosphate + 2 H(+). It functions in the pathway purine metabolism; AMP biosynthesis via de novo pathway; AMP from IMP: step 1/2. Functionally, plays an important role in the de novo pathway of purine nucleotide biosynthesis. Catalyzes the first committed step in the biosynthesis of AMP from IMP. In Prochlorococcus marinus (strain MIT 9312), this protein is Adenylosuccinate synthetase.